Reading from the N-terminus, the 378-residue chain is Transcription elongation factor TFIIS (378 aa).

Met-1 carries the post-translational modification N-acetylmethionine. Residues 10 to 89 (EGAKKAADAA…EIWKKVVIEE (80 aa)) enclose the TFIIS N-terminal domain. The TFIIS central domain maps to 210–333 (VRDKIRELLV…DCERGLAAKA (124 aa)). The TFIIS-type zinc-finger motif lies at 336–376 (DQFKCGRCGQRKCTYYQMQTRSADEPMTTYVTCVNCDNHWK). Positions 340, 343, 368, and 371 each coordinate Zn(2+).

As to expression, expressed in roots, leaves and flowers.

The protein localises to the nucleus. Necessary for efficient RNA polymerase II transcription elongation past template-encoded arresting sites. Involved in the control of seed dormancy and germination. In Arabidopsis thaliana (Mouse-ear cress), this protein is Transcription elongation factor TFIIS.